The chain runs to 265 residues: MSESLYSIRMRSSCDERHISGAENLAPAERLHALASAMVRRALAHDKGQAEQIFLSIEKVDTADIVCHGLPDIRTIRVASVEQGRDAALSMLEKAGVNPQAARRAMATMARGAAPNGDSMRGAMLVDASTGQRLEKDRYRGVRVSRMDLDEQTSVRLKNLLQTAGLDNPHVREALVLAAKVIHAPGVIAELCWSDDPGYTAGYVAGASLGYVRFPLLKPAGEVRGGRAFFLSSDADLAQLIPYLERQVVLIDRIGRIFPDERWPA.

Belongs to the BioW family. As to quaternary structure, homodimer. Mg(2+) serves as cofactor.

The catalysed reaction is heptanedioate + ATP + CoA = 6-carboxyhexanoyl-CoA + AMP + diphosphate. It participates in metabolic intermediate metabolism; pimeloyl-CoA biosynthesis; pimeloyl-CoA from pimelate: step 1/1. In terms of biological role, catalyzes the transformation of pimelate into pimeloyl-CoA with concomitant hydrolysis of ATP to AMP. The sequence is that of 6-carboxyhexanoate--CoA ligase from Syntrophotalea carbinolica (strain DSM 2380 / NBRC 103641 / GraBd1) (Pelobacter carbinolicus).